The chain runs to 824 residues: RelA-associated inhibitor (824 aa).

Met-1 is subject to N-acetylmethionine. Disordered regions lie at residues Ser-48 to Lys-87 and Arg-99 to Leu-271. Phosphoserine occurs at positions 84, 100, 102, 110, 113, 119, and 120. Residue Thr-123 is modified to Phosphothreonine. Ser-134 is subject to Phosphoserine. Residues Arg-137, Arg-142, Arg-144, Arg-160, Arg-167, and Arg-180 each carry the omega-N-methylarginine modification. A phosphoserine mark is found at Ser-183, Ser-187, and Ser-203. Residue Arg-205 is modified to Omega-N-methylarginine. Residue Thr-275 is modified to Phosphothreonine. Ser-279 carries the phosphoserine modification. Disordered stretches follow at residues Ser-291–Pro-370 and Arg-388–Pro-501. Position 307 is a phosphothreonine (Thr-307). Ser-315, Ser-331, and Ser-338 each carry phosphoserine. Thr-340 is subject to Phosphothreonine. The segment covering Gln-359–Pro-370 has biased composition (low complexity). The span at Ala-400 to Gln-424 shows a compositional bias: pro residues. Residues Met-425–Gln-440 show a composition bias toward low complexity. A phosphoserine mark is found at Ser-522, Ser-563, and Ser-593. A disordered region spans residues Phe-547–Arg-614. Residues Pro-575–Gln-597 are compositionally biased toward pro residues. 2 ANK repeats span residues Glu-655–Ser-684 and His-688–Ala-717. In terms of domain architecture, SH3 spans Met-754–Arg-816.

It belongs to the iASPP family. Interacts with TP63 and TP73. Interacts with RELA NF-kappa-B subunit and with SP1 via its C-terminal part. Interacts (via SH3 domain and ANK repeats) with p53/TP53; the interaction inhibits pro-apoptotic activity of p53/TP53. As to expression, most abundant in skin with high levels also found in heart, testis and stomach. In 15.5 dpc embryonic heart, expressed at higher levels in atria than ventricles.

The protein resides in the cytoplasm. It localises to the nucleus. In terms of biological role, regulator that plays a central role in regulation of apoptosis and transcription via its interaction with NF-kappa-B and p53/TP53 proteins. Inhibits p53/TP53 function, possibly by preventing the association between p53/TP53 and ASPP1 or ASPP2, and therefore suppressing the subsequent activation of apoptosis. Is involved in NF-kappa-B dependent negative regulation of inflammatory response. This Mus musculus (Mouse) protein is RelA-associated inhibitor.